The sequence spans 449 residues: Elongation factor 1-alpha 1 (449 aa).

The tr-type G domain occupies 5–230; the sequence is KFHINIVVIG…DQINEPKRPS (226 aa). A G1 region spans residues 14-21; that stretch reads GHVDSGKS. Position 14 to 21 (14 to 21) interacts with GTP; it reads GHVDSGKS. Lysine 55 is subject to N6,N6-dimethyllysine. The interval 70–74 is G2; that stretch reads GITID. Lysine 79 carries the post-translational modification N6,N6,N6-trimethyllysine. The segment at 91–94 is G3; that stretch reads DAPG. GTP-binding positions include 91–95 and 153–156; these read DAPGH and NKMD. Positions 153–156 are G4; the sequence is NKMD. Lysine 187 carries the post-translational modification N6,N6,N6-trimethyllysine. Residues 194-196 form a G5 region; sequence SGF. Position 261 is an N6-methyllysine (lysine 261). Residues lysine 306 and lysine 396 each carry the N6,N6,N6-trimethyllysine modification. Residues lysine 438 and lysine 441 each participate in a glycyl lysine isopeptide (Lys-Gly) (interchain with G-Cter in ubiquitin) cross-link.

It belongs to the TRAFAC class translation factor GTPase superfamily. Classic translation factor GTPase family. EF-Tu/EF-1A subfamily.

It is found in the cytoplasm. This protein promotes the GTP-dependent binding of aminoacyl-tRNA to the A-site of ribosomes during protein biosynthesis. This chain is Elongation factor 1-alpha 1 (A1), found in Arabidopsis thaliana (Mouse-ear cress).